We begin with the raw amino-acid sequence, 551 residues long: MNNTIINSLIGGDDSIKRSNVFAVDSQIPTLYMPQYISLSGVMTNNGPDNQTIASFEIRDQYITALNHLVLSLELPEVKGMGRFGYVPYVGYKCINHVSVSSCNGVIWEIEGEELYNNCINNTIALKHSGYSSELNDISIGLTPNDTIKEPSTVYVYIKTPFDVEDTFSSLKLSDSKITVTVTFNPVSDIVIRDSSFDFETFNKEFVYVPELSFIGYMVKNVQIKPSFIEKPRRVIGQINQPTATVTEVHAATSLSVYTKPYYGNTDNKFISYPGYSQDEKDYIDAYVSRLLDDLVIVSDGPPTGYPESAEIVEVPEDGIVSIQDADVYVKIDNVPDNMSVYLHTNLLMFGTRKNSFIYNISKKFSAITGTYSDATKRTVFAHISHSINIIDTSIPVSLWTSQRNVYNGDNRSAESKAKDLFINDPFIKGIDFKNKTDIISRLEVRFGNDVLYSENGPISRIYNELLTKSNNGTRTLTFNFTPKIFFRPTTITANVSRGKDKLSVRVVYSTMDVNHPIYYVQKQLVVVCNDLYKVSYDQGVSITKIMGDNN.

The protein belongs to the orthopoxvirus protein OPG125 family. Homotrimer. Self-assembles to form a layer. Interacts with OPG158 (via N-terminus); this interaction is necessary for OPG125 association with membranes.

It is found in the membrane. Its function is as follows. Scaffold protein which forms a transitory spherical honeycomb lattice providing curvature and rigidity to the convex membrane of crescent and immature virions (IV). This association occurs concomitantly with viral membrane formation. Targeted by the drug rifampicin, which prevents the formation of this lattice, and hence virus morphogenesis. In the presence of rifampicin, irregularly shaped membranes that lack the honeycomb layer accumulate around areas of electron-dense viroplasm. This layer is lost from virions during maturation from IV to mature virion (MV), through the proteolysis of OPG158 N-terminus. The sequence is that of Scaffold protein OPG125 (OPG125) from Homo sapiens (Human).